A 77-amino-acid chain; its full sequence is Cell division topological specificity factor (77 aa).

This sequence belongs to the MinE family.

Prevents the cell division inhibition by proteins MinC and MinD at internal division sites while permitting inhibition at polar sites. This ensures cell division at the proper site by restricting the formation of a division septum at the midpoint of the long axis of the cell. This is Cell division topological specificity factor from Helicobacter pylori (strain P12).